The chain runs to 108 residues: UPF0235 protein Rpal_0418 (108 aa).

This sequence belongs to the UPF0235 family.

The protein is UPF0235 protein Rpal_0418 of Rhodopseudomonas palustris (strain TIE-1).